Consider the following 228-residue polypeptide: Urease accessory protein UreF (228 aa).

This sequence belongs to the UreF family. As to quaternary structure, ureD, UreF and UreG form a complex that acts as a GTP-hydrolysis-dependent molecular chaperone, activating the urease apoprotein by helping to assemble the nickel containing metallocenter of UreC. The UreE protein probably delivers the nickel.

It localises to the cytoplasm. In terms of biological role, required for maturation of urease via the functional incorporation of the urease nickel metallocenter. The chain is Urease accessory protein UreF from Yersinia pseudotuberculosis serotype IB (strain PB1/+).